The following is a 442-amino-acid chain: Septin-8 (442 aa).

Over residues 1–16 (MAATDLERISNAEPEP) the composition is skewed to basic and acidic residues. Residues 1–21 (MAATDLERISNAEPEPRSLSL) form a disordered region. Ala-2 bears the N-acetylalanine mark. Ser-10 is subject to Phosphoserine. Positions 41 to 307 (QGFSFNILCV…ELYRRCKLEE (267 aa)) constitute a Septin-type G domain. A G1 motif region spans residues 51–58 (GETGIGKS). Residues 51 to 58 (GETGIGKS), Gly-106, 187 to 195 (KADTISKSE), Gly-241, and Arg-256 contribute to the GTP site. The segment at 103-106 (DAVG) is G3 motif. The G4 motif stretch occupies residues 186–189 (AKAD). Residues 322–407 (LQETYEAKRK…FNCRKAAMEA (86 aa)) are a coiled coil. The segment covering 411–420 (QALHATSQQP) has biased composition (polar residues). The disordered stretch occupies residues 411-442 (QALHATSQQPLRKDKDKKKVGGWSSIYSVTIP).

This sequence belongs to the TRAFAC class TrmE-Era-EngA-EngB-Septin-like GTPase superfamily. Septin GTPase family. In terms of assembly, septins polymerize into heterooligomeric protein complexes that form filaments, and can associate with cellular membranes, actin filaments and microtubules. GTPase activity is required for filament formation. Interacts with SEPTIN7. Interacts with CDK14, SEPTIN4 and SEPTIN5. Interacts with VAMP2; the interaction inhibits interaction of VAMP2 with SYP. Interacts with STX1A. As to expression, expressed in cerebrum, hippocampus and cerebellum (at protein level). Expressed in heart (at protein level).

Its subcellular location is the cytoplasm. It is found in the cytoskeleton. It localises to the synapse. The protein resides in the cell projection. The protein localises to the axon. Its subcellular location is the cytoplasmic vesicle. It is found in the secretory vesicle. It localises to the synaptic vesicle membrane. The protein resides in the presynapse. Its function is as follows. Filament-forming cytoskeletal GTPase. May play a role in platelet secretion. Seems to participate in the process of SNARE complex formation in synaptic vesicles. This Rattus norvegicus (Rat) protein is Septin-8.